The sequence spans 351 residues: Histidinol-phosphate aminotransferase (351 aa).

Lys213 is modified (N6-(pyridoxal phosphate)lysine).

This sequence belongs to the class-II pyridoxal-phosphate-dependent aminotransferase family. Histidinol-phosphate aminotransferase subfamily. As to quaternary structure, homodimer. The cofactor is pyridoxal 5'-phosphate.

It catalyses the reaction L-histidinol phosphate + 2-oxoglutarate = 3-(imidazol-4-yl)-2-oxopropyl phosphate + L-glutamate. The protein operates within amino-acid biosynthesis; L-histidine biosynthesis; L-histidine from 5-phospho-alpha-D-ribose 1-diphosphate: step 7/9. This is Histidinol-phosphate aminotransferase from Thermoanaerobacter sp. (strain X514).